Reading from the N-terminus, the 274-residue chain is Thiamine kinase (274 aa).

It belongs to the thiamine kinase family.

The catalysed reaction is thiamine + ATP = thiamine phosphate + ADP + H(+). It functions in the pathway cofactor biosynthesis; thiamine diphosphate biosynthesis; thiamine phosphate from thiamine: step 1/1. Functionally, catalyzes the ATP-dependent phosphorylation of thiamine to thiamine phosphate. Is involved in thiamine salvage. The chain is Thiamine kinase from Escherichia coli O17:K52:H18 (strain UMN026 / ExPEC).